Consider the following 441-residue polypeptide: Pre-mRNA-splicing factor PRP46 (441 aa).

Disordered stretches follow at residues Met1–Ser22 and Met81–Leu107. The span at Ala83 to Leu107 shows a compositional bias: polar residues. WD repeat units lie at residues Gly130–Thr169, Gly172–His211, Gly214–Val253, Gly256–Thr295, His298–Asn336, Asp339–Gln379, and Glu388–Ser427.

This sequence belongs to the WD repeat PRL1/PRL2 family. Associated with the spliceosome.

It is found in the cytoplasm. The protein localises to the nucleus. Functionally, involved in pre-mRNA splicing and required for cell cycle progression at G2/M. This is Pre-mRNA-splicing factor PRP46 (PRP46) from Yarrowia lipolytica (strain CLIB 122 / E 150) (Yeast).